The primary structure comprises 492 residues: Transmembrane protein 104 homolog (492 aa).

Residues 1–17 (MQSNTDSSTSGTYSQTV) are Cytoplasmic-facing. A helical transmembrane segment spans residues 18-38 (GLLYVFNLIVGTGALALPKAF). Residues 39–44 (QTAGWL) are Extracellular-facing. The helical transmembrane segment at 45–65 (LSITLLTFSAFMSYVAATFVI) threads the bilayer. Over 66 to 113 (EALSVANAVLSKKRRVEYDDVVVADGPSTFEISKKVEVSEMASMFLSK) the chain is Cytoplasmic. A helical membrane pass occupies residues 114–134 (VSLVFSYFAIIIYLFGDLAIY). Residues 135 to 176 (STTVPKSAMNIVCATINASTVKSSDPCHESWPEILTRMTVYR) lie on the Extracellular side of the membrane. Asn151 carries N-linked (GlcNAc...) asparagine glycosylation. Residues 177 to 197 (FFVIIFVVVVCLPMVIAGITK) form a helical membrane-spanning segment. At 198-209 (TRHIQIMTTLSR) the chain is on the cytoplasmic side. Residues 210–230 (WAAFILMISLATMQLSSDGAA) traverse the membrane as a helical segment. The Extracellular portion of the chain corresponds to 231 to 237 (AHPPAYN). Residues 238–258 (FHGFGSLFGCAVYAFMCHHSI) form a helical membrane-spanning segment. The Cytoplasmic portion of the chain corresponds to 259–274 (PSLITPMRTKDNVFGK). Residues 275–295 (IALVYGVVGVFYFTLSLTGAF) traverse the membrane as a helical segment. Topologically, residues 296–324 (AFEHVQDIYTLNFFHDGNTSFIYSIIDYF) are extracellular. N-linked (GlcNAc...) asparagine glycosylation occurs at Asn313. Residues 325-345 (LALFPIITLTSSYPIIALTLI) traverse the membrane as a helical segment. Over 346-392 (NNFNVVKDILCPKVGQENESLLEADSLVEDNDTDDEREARNARNEKS) the chain is Cytoplasmic. The helical transmembrane segment at 393 to 413 (VFDVLVPALVLALPTFLSLLT) threads the bilayer. Topologically, residues 414-415 (DD) are extracellular. A helical transmembrane segment spans residues 416-436 (MLLLASITGSFPGVAVQFAIP). The Cytoplasmic segment spans residues 437-466 (CLLVTAARKHARSVLNFPVPRKNNSPFQSP). Residues 467–487 (IWIVLISSWAGFSMIMVLLNL) form a helical membrane-spanning segment. Residues 488-492 (VGVKF) are Extracellular-facing.

Belongs to the TMEM104 family.

Its subcellular location is the membrane. The chain is Transmembrane protein 104 homolog from Caenorhabditis elegans.